The following is a 623-amino-acid chain: DNA mismatch repair protein MutL (623 aa).

Positions 353 to 368 are enriched in polar residues; sequence AQQSAPRPANSYSPAS. The interval 353 to 389 is disordered; it reads AQQSAPRPANSYSPASWRTAPPAPRSEWSPQTAQTAH.

Belongs to the DNA mismatch repair MutL/HexB family.

Its function is as follows. This protein is involved in the repair of mismatches in DNA. It is required for dam-dependent methyl-directed DNA mismatch repair. May act as a 'molecular matchmaker', a protein that promotes the formation of a stable complex between two or more DNA-binding proteins in an ATP-dependent manner without itself being part of a final effector complex. This Brucella melitensis biotype 2 (strain ATCC 23457) protein is DNA mismatch repair protein MutL.